Consider the following 511-residue polypeptide: MEKFEGYSEKHKSRQQYFVYPLLFQEYIYAFAPDYGLNGSEPVEIVGCNNKKFSSLLVKRLIIRMYQQNFLDNSVNHPNQDRLLDYKNYFYSEFYSQILSEGFAIVVEIPFSLRELFCPKEKEIPKFQNLRSIHSIFPFFEDKFLHLDYLSHIEIPYPIHLEILVQLLQYRIQDVPSLHLLRFLLNYYSNWNSFITSMKSIFIFKKENKRLFRFLYNSYVSEYEFFLLFLRKQSSCLPLASSGTFLERIHFSRKMEHFGIMYPGFSRKTLWFFMDPLMHYVRYQGKAILASKGTFLLKKKWKCYLINLWQYYFCFWTQPRRIHINQLANSCFDFMGYLSSVPKSSLLVRNQMLENSFLIDTRMKKFDTIVHATLLIGYLSKAQFCTGSGHPISKPIWTDLSDWDILDRFGRICRNLFHYYSGSSKKKTLYRLKYILRLSCARTLGPKHKSTVRAFMQWLGSVFLEEFFREEEQVFSLMFAKTTYFSFRGSHSERIWYLDILRINDLVNPLN.

It belongs to the intron maturase 2 family. MatK subfamily.

It is found in the plastid. The protein resides in the chloroplast. Functionally, usually encoded in the trnK tRNA gene intron. Probably assists in splicing its own and other chloroplast group II introns. The chain is Maturase K from Triticum aestivum (Wheat).